The chain runs to 382 residues: Glycerate dehydrogenase (382 aa).

NAD(+)-binding positions include 175–176, 271–273, and D297; these read RI and CSR. The active site involves R273. E302 is an active-site residue. H320 acts as the Proton donor in catalysis. Residue 320 to 323 participates in NAD(+) binding; that stretch reads HIAS.

This sequence belongs to the D-isomer specific 2-hydroxyacid dehydrogenase family.

It is found in the peroxisome. It catalyses the reaction (R)-glycerate + NAD(+) = 3-hydroxypyruvate + NADH + H(+). The protein operates within photosynthesis; photorespiration; 3-phospho-D-glycerate from glycine: step 3/4. The sequence is that of Glycerate dehydrogenase (HPR-A) from Cucumis sativus (Cucumber).